The following is a 307-amino-acid chain: Branched-chain-amino-acid aminotransferase (307 aa).

Residue Lys160 is modified to N6-(pyridoxal phosphate)lysine.

Belongs to the class-IV pyridoxal-phosphate-dependent aminotransferase family. Pyridoxal 5'-phosphate is required as a cofactor.

The catalysed reaction is L-leucine + 2-oxoglutarate = 4-methyl-2-oxopentanoate + L-glutamate. It carries out the reaction L-isoleucine + 2-oxoglutarate = (S)-3-methyl-2-oxopentanoate + L-glutamate. It catalyses the reaction L-valine + 2-oxoglutarate = 3-methyl-2-oxobutanoate + L-glutamate. It functions in the pathway amino-acid biosynthesis; L-isoleucine biosynthesis; L-isoleucine from 2-oxobutanoate: step 4/4. Its pathway is amino-acid biosynthesis; L-leucine biosynthesis; L-leucine from 3-methyl-2-oxobutanoate: step 4/4. It participates in amino-acid biosynthesis; L-valine biosynthesis; L-valine from pyruvate: step 4/4. In terms of biological role, acts on leucine, isoleucine and valine. This Pseudomonas aeruginosa (strain ATCC 15692 / DSM 22644 / CIP 104116 / JCM 14847 / LMG 12228 / 1C / PRS 101 / PAO1) protein is Branched-chain-amino-acid aminotransferase (ilvE).